The primary structure comprises 704 residues: uncharacterized protein (704 aa).

This is an uncharacterized protein from Rickettsia conorii (strain ATCC VR-613 / Malish 7).